The primary structure comprises 237 residues: 1-(5-phosphoribosyl)-5-[(5-phosphoribosylamino)methylideneamino] imidazole-4-carboxamide isomerase (237 aa).

D8 serves as the catalytic Proton acceptor. The active-site Proton donor is D129.

Belongs to the HisA/HisF family.

The protein resides in the cytoplasm. The enzyme catalyses 1-(5-phospho-beta-D-ribosyl)-5-[(5-phospho-beta-D-ribosylamino)methylideneamino]imidazole-4-carboxamide = 5-[(5-phospho-1-deoxy-D-ribulos-1-ylimino)methylamino]-1-(5-phospho-beta-D-ribosyl)imidazole-4-carboxamide. It functions in the pathway amino-acid biosynthesis; L-histidine biosynthesis; L-histidine from 5-phospho-alpha-D-ribose 1-diphosphate: step 4/9. This is 1-(5-phosphoribosyl)-5-[(5-phosphoribosylamino)methylideneamino] imidazole-4-carboxamide isomerase from Dehalococcoides mccartyi (strain ATCC BAA-2266 / KCTC 15142 / 195) (Dehalococcoides ethenogenes (strain 195)).